Reading from the N-terminus, the 414-residue chain is Serine hydroxymethyltransferase (414 aa).

(6S)-5,6,7,8-tetrahydrofolate is bound by residues Leu-116 and 120-122 (GHL). Lys-224 is modified (N6-(pyridoxal phosphate)lysine). (6S)-5,6,7,8-tetrahydrofolate-binding positions include Glu-240 and 348–350 (SPF).

This sequence belongs to the SHMT family. In terms of assembly, homodimer. Pyridoxal 5'-phosphate serves as cofactor.

The protein resides in the cytoplasm. It carries out the reaction (6R)-5,10-methylene-5,6,7,8-tetrahydrofolate + glycine + H2O = (6S)-5,6,7,8-tetrahydrofolate + L-serine. The protein operates within one-carbon metabolism; tetrahydrofolate interconversion. It participates in amino-acid biosynthesis; glycine biosynthesis; glycine from L-serine: step 1/1. Functionally, catalyzes the reversible interconversion of serine and glycine with tetrahydrofolate (THF) serving as the one-carbon carrier. This reaction serves as the major source of one-carbon groups required for the biosynthesis of purines, thymidylate, methionine, and other important biomolecules. Also exhibits THF-independent aldolase activity toward beta-hydroxyamino acids, producing glycine and aldehydes, via a retro-aldol mechanism. This is Serine hydroxymethyltransferase from Campylobacter jejuni subsp. jejuni serotype O:23/36 (strain 81-176).